The chain runs to 262 residues: Glutamate racemase (262 aa).

Substrate-binding positions include 10 to 11 (DS) and 42 to 43 (FG). The Proton donor/acceptor role is filled by Cys-74. Residue 75-76 (NT) coordinates substrate. Catalysis depends on Cys-189, which acts as the Proton donor/acceptor. Residue 190–191 (TH) coordinates substrate.

It belongs to the aspartate/glutamate racemases family.

It carries out the reaction L-glutamate = D-glutamate. It functions in the pathway cell wall biogenesis; peptidoglycan biosynthesis. Provides the (R)-glutamate required for cell wall biosynthesis. The polypeptide is Glutamate racemase (Mesorhizobium japonicum (strain LMG 29417 / CECT 9101 / MAFF 303099) (Mesorhizobium loti (strain MAFF 303099))).